Reading from the N-terminus, the 323-residue chain is Fos-related antigen 2 (323 aa).

The segment covering 1 to 27 (MYQDYPGSFDTSSRGSSGSPGHPEPYS) has biased composition (low complexity). Positions 1–31 (MYQDYPGSFDTSSRGSSGSPGHPEPYSAGAA) are disordered. The bZIP domain occupies 124–187 (EEKRRIRRER…EKLEFMLVAH (64 aa)). Residues 126–128 (KRR) are basic motif. The interval 129 to 136 (IRRERNKL) is leucine-zipper. Disordered regions lie at residues 194 to 214 (SPEERRSPPTSSLQSVRTGAS) and 288 to 323 (ESPLSPSESCSKAHRRSSSSGDQSSDSLNSPTLLAL). The segment covering 305–317 (SSSGDQSSDSLNS) has biased composition (low complexity).

Belongs to the bZIP family. Fos subfamily. As to quaternary structure, heterodimer with JUN.

It is found in the nucleus. The chain is Fos-related antigen 2 (FOSL2) from Gallus gallus (Chicken).